Here is a 335-residue protein sequence, read N- to C-terminus: Nucleoid-associated protein YejK (335 aa).

Belongs to the YejK family.

It localises to the cytoplasm. The protein resides in the nucleoid. This Salmonella enteritidis PT4 (strain P125109) protein is Nucleoid-associated protein YejK.